Here is a 597-residue protein sequence, read N- to C-terminus: Protein unc-93 homolog B1 (597 aa).

A disordered region spans residues Met-1 to Pro-29. A run of 5 helical transmembrane segments spans residues Val-64–Met-84, Lys-110–Ile-130, Phe-132–Thr-152, Thr-160–Gly-180, and Ile-223–Leu-243. 2 N-linked (GlcNAc...) asparagine glycosylation sites follow: Asn-251 and Asn-272. A run of 5 helical transmembrane segments spans residues Leu-285–Gly-305, Leu-343–Leu-363, Leu-378–Trp-398, Val-403–Ala-423, and Val-428–Leu-448. The N-linked (GlcNAc...) asparagine glycan is linked to Asn-449. 2 helical membrane passes run Phe-469–Ser-489 and Leu-491–Tyr-511. The segment at Val-522–Gln-597 is disordered. Ser-547 and Ser-550 each carry phosphoserine.

The protein belongs to the unc-93 family. As to quaternary structure, interacts with TLR3, TLR5, TLR7, and TLR9 (probably via transmembrane domain). Post-translationally, N-glycosylated. Expressed in plasmocytoid dendritic cells (at protein level). Highly expressed in antigen-presenting cells. Expressed in heart, and at lower level in kidney. Expressed at low level in other tissues.

The protein resides in the endoplasmic reticulum membrane. It is found in the endosome. It localises to the lysosome. The protein localises to the cytoplasmic vesicle. Its subcellular location is the phagosome. In terms of biological role, plays an important role in innate and adaptive immunity by regulating nucleotide-sensing Toll-like receptor (TLR) signaling. Required for the transport of a subset of TLRs (including TLR3, TLR7 and TLR9) from the endoplasmic reticulum to endolysosomes where they can engage pathogen nucleotides and activate signaling cascades. May play a role in autoreactive B-cells removal. The chain is Protein unc-93 homolog B1 from Homo sapiens (Human).